The following is a 333-amino-acid chain: Serine/threonine-protein phosphatase PP1-beta (333 aa).

Residues D63, H65, D91, and N123 each contribute to the Mn(2+) site. H124 functions as the Proton donor in the catalytic mechanism. Mn(2+) is bound by residues H172 and H247. Residues 306–333 (GAGGVGSNRPVTPPRNAPAAQPKKGAKK) form a disordered region. Low complexity predominate over residues 322 to 333 (APAAQPKKGAKK).

The protein belongs to the PPP phosphatase family. PP-1 subfamily. Interacts with lab-1; the interaction is direct. Interacts with knl-1; the interaction is direct. Mn(2+) is required as a cofactor.

The protein localises to the cytoplasm. It is found in the nucleus. The enzyme catalyses O-phospho-L-seryl-[protein] + H2O = L-seryl-[protein] + phosphate. It catalyses the reaction O-phospho-L-threonyl-[protein] + H2O = L-threonyl-[protein] + phosphate. Serine/threonine-protein phosphatase essential for chromosomal dynamics during meiosis and mitosis. Antagonizes the function of air-2 in the regulation of chromosome cohesion. Dephosphorylates histone H3 at 'Ser-10'. Also involved in the activation of chloride channel clh-3 during cell swelling and meiotic maturation. Essential for embryogenesis. The polypeptide is Serine/threonine-protein phosphatase PP1-beta (gsp-2) (Caenorhabditis briggsae).